Consider the following 289-residue polypeptide: Protoheme IX farnesyltransferase (289 aa).

The next 9 helical transmembrane spans lie at 18-38 (VTSL…EQSP), 40-60 (GFLI…SFIF), 87-107 (VVQA…VLAV), 111-131 (LLTA…YTIF), 139-159 (NIVI…AAIG), 168-188 (SLFM…AIFL), 212-232 (SIFF…FLES), 234-254 (MGFL…ILSY), and 269-289 (FFFS…DHLI).

Belongs to the UbiA prenyltransferase family. Protoheme IX farnesyltransferase subfamily.

It is found in the cell inner membrane. It catalyses the reaction heme b + (2E,6E)-farnesyl diphosphate + H2O = Fe(II)-heme o + diphosphate. The protein operates within porphyrin-containing compound metabolism; heme O biosynthesis; heme O from protoheme: step 1/1. Converts heme B (protoheme IX) to heme O by substitution of the vinyl group on carbon 2 of heme B porphyrin ring with a hydroxyethyl farnesyl side group. The protein is Protoheme IX farnesyltransferase of Leptospira interrogans serogroup Icterohaemorrhagiae serovar copenhageni (strain Fiocruz L1-130).